Here is a 156-residue protein sequence, read N- to C-terminus: 6,7-dimethyl-8-ribityllumazine synthase (156 aa).

Residues Phe-22, 57-59 (AYE), and 81-83 (TVI) contribute to the 5-amino-6-(D-ribitylamino)uracil site. 86–87 (GT) contributes to the (2S)-2-hydroxy-3-oxobutyl phosphate binding site. His-89 acts as the Proton donor in catalysis. Phe-114 provides a ligand contact to 5-amino-6-(D-ribitylamino)uracil. Residue Arg-128 participates in (2S)-2-hydroxy-3-oxobutyl phosphate binding.

The protein belongs to the DMRL synthase family. In terms of assembly, forms an icosahedral capsid composed of 60 subunits, arranged as a dodecamer of pentamers.

The catalysed reaction is (2S)-2-hydroxy-3-oxobutyl phosphate + 5-amino-6-(D-ribitylamino)uracil = 6,7-dimethyl-8-(1-D-ribityl)lumazine + phosphate + 2 H2O + H(+). The protein operates within cofactor biosynthesis; riboflavin biosynthesis; riboflavin from 2-hydroxy-3-oxobutyl phosphate and 5-amino-6-(D-ribitylamino)uracil: step 1/2. Catalyzes the formation of 6,7-dimethyl-8-ribityllumazine by condensation of 5-amino-6-(D-ribitylamino)uracil with 3,4-dihydroxy-2-butanone 4-phosphate. This is the penultimate step in the biosynthesis of riboflavin. The chain is 6,7-dimethyl-8-ribityllumazine synthase from Yersinia pseudotuberculosis serotype O:1b (strain IP 31758).